Consider the following 452-residue polypeptide: Pup--protein ligase (452 aa).

Glutamate 9 is a binding site for Mg(2+). Arginine 53 contributes to the ATP binding site. Tyrosine 55 serves as a coordination point for Mg(2+). The active-site Proton acceptor is the aspartate 57. Glutamate 63 provides a ligand contact to Mg(2+). The ATP site is built by threonine 66 and tryptophan 419.

The protein belongs to the Pup ligase/Pup deamidase family. Pup-conjugating enzyme subfamily.

It carries out the reaction ATP + [prokaryotic ubiquitin-like protein]-L-glutamate + [protein]-L-lysine = ADP + phosphate + N(6)-([prokaryotic ubiquitin-like protein]-gamma-L-glutamyl)-[protein]-L-lysine.. The protein operates within protein degradation; proteasomal Pup-dependent pathway. Its pathway is protein modification; protein pupylation. Functionally, catalyzes the covalent attachment of the prokaryotic ubiquitin-like protein modifier Pup to the proteasomal substrate proteins, thereby targeting them for proteasomal degradation. This tagging system is termed pupylation. The ligation reaction involves the side-chain carboxylate of the C-terminal glutamate of Pup and the side-chain amino group of a substrate lysine. This Mycolicibacterium gilvum (strain PYR-GCK) (Mycobacterium gilvum (strain PYR-GCK)) protein is Pup--protein ligase.